A 164-amino-acid polypeptide reads, in one-letter code: SsrA-binding protein (164 aa).

It belongs to the SmpB family.

The protein localises to the cytoplasm. Required for rescue of stalled ribosomes mediated by trans-translation. Binds to transfer-messenger RNA (tmRNA), required for stable association of tmRNA with ribosomes. tmRNA and SmpB together mimic tRNA shape, replacing the anticodon stem-loop with SmpB. tmRNA is encoded by the ssrA gene; the 2 termini fold to resemble tRNA(Ala) and it encodes a 'tag peptide', a short internal open reading frame. During trans-translation Ala-aminoacylated tmRNA acts like a tRNA, entering the A-site of stalled ribosomes, displacing the stalled mRNA. The ribosome then switches to translate the ORF on the tmRNA; the nascent peptide is terminated with the 'tag peptide' encoded by the tmRNA and targeted for degradation. The ribosome is freed to recommence translation, which seems to be the essential function of trans-translation. The sequence is that of SsrA-binding protein from Gluconobacter oxydans (strain 621H) (Gluconobacter suboxydans).